The primary structure comprises 177 residues: NAD(P)H-quinone oxidoreductase subunit 6, chloroplastic (177 aa).

Helical transmembrane passes span 10 to 30 (IFLVFLGSGLILGGLGVVLLT), 32 to 52 (PVYSAFSLGLVLVCISLFHIP), 61 to 81 (AQLLIYVGAINVLIVFAVMFM), 92 to 112 (LWTVGDGVTSLICTSILFSLI), and 152 to 172 (FYLPFELISIILLVALVGAIA).

Belongs to the complex I subunit 6 family. As to quaternary structure, NDH is composed of at least 16 different subunits, 5 of which are encoded in the nucleus.

The protein resides in the plastid. It localises to the chloroplast thylakoid membrane. It carries out the reaction a plastoquinone + NADH + (n+1) H(+)(in) = a plastoquinol + NAD(+) + n H(+)(out). The catalysed reaction is a plastoquinone + NADPH + (n+1) H(+)(in) = a plastoquinol + NADP(+) + n H(+)(out). In terms of biological role, NDH shuttles electrons from NAD(P)H:plastoquinone, via FMN and iron-sulfur (Fe-S) centers, to quinones in the photosynthetic chain and possibly in a chloroplast respiratory chain. The immediate electron acceptor for the enzyme in this species is believed to be plastoquinone. Couples the redox reaction to proton translocation, and thus conserves the redox energy in a proton gradient. This Illicium oligandrum (Star anise) protein is NAD(P)H-quinone oxidoreductase subunit 6, chloroplastic (ndhG).